The following is a 209-amino-acid chain: Large ribosomal subunit protein uL4 (209 aa).

Residues 50–89 (MTKTKGLVSGGGKKPFKQKGTGGARQGSSRSILMPGGGTA) form a disordered region.

Belongs to the universal ribosomal protein uL4 family. Part of the 50S ribosomal subunit.

In terms of biological role, one of the primary rRNA binding proteins, this protein initially binds near the 5'-end of the 23S rRNA. It is important during the early stages of 50S assembly. It makes multiple contacts with different domains of the 23S rRNA in the assembled 50S subunit and ribosome. Its function is as follows. Forms part of the polypeptide exit tunnel. This chain is Large ribosomal subunit protein uL4, found in Bdellovibrio bacteriovorus (strain ATCC 15356 / DSM 50701 / NCIMB 9529 / HD100).